The primary structure comprises 116 residues: uncharacterized protein (116 aa).

This is an uncharacterized protein from Acidianus filamentous virus 2 (isolate Italy/Pozzuoli) (AFV-2).